The chain runs to 425 residues: Glutamate-1-semialdehyde 2,1-aminomutase (425 aa).

At Lys265 the chain carries N6-(pyridoxal phosphate)lysine.

It belongs to the class-III pyridoxal-phosphate-dependent aminotransferase family. HemL subfamily. As to quaternary structure, homodimer. Requires pyridoxal 5'-phosphate as cofactor.

It is found in the cytoplasm. The catalysed reaction is (S)-4-amino-5-oxopentanoate = 5-aminolevulinate. It participates in porphyrin-containing compound metabolism; protoporphyrin-IX biosynthesis; 5-aminolevulinate from L-glutamyl-tRNA(Glu): step 2/2. In Clostridium perfringens (strain ATCC 13124 / DSM 756 / JCM 1290 / NCIMB 6125 / NCTC 8237 / Type A), this protein is Glutamate-1-semialdehyde 2,1-aminomutase.